The chain runs to 189 residues: Interferon alpha-16 (189 aa).

Positions 1-23 (MALSFSLLMAVLVLSYKSICSLG) are cleaved as a signal peptide. Disulfide bonds link Cys24-Cys122 and Cys52-Cys162.

Belongs to the alpha/beta interferon family.

Its subcellular location is the secreted. Produced by macrophages, IFN-alpha have antiviral activities. Interferon stimulates the production of two enzymes: a protein kinase and an oligoadenylate synthetase. This chain is Interferon alpha-16 (IFNA16), found in Homo sapiens (Human).